The chain runs to 809 residues: Zinc finger CCCH domain-containing protein 24 (809 aa).

The residue at position 1 (Met1) is an N-acetylmethionine. The tract at residues 1–74 (METSSIEINE…NLESSDTKIT (74 aa)) is disordered. Residues 30–46 (ETSSIDELPSSDSNATD) show a composition bias toward polar residues. Basic and acidic residues predominate over residues 51–65 (VGEKRKRADEDEKTN). A C3H1-type zinc finger spans residues 79-107 (WWKTSLCSYFRREASCSHGNECKYAHGEA). S-adenosyl-L-methionine contacts are provided by Gln536 and Glu586. The tract at residues 652-693 (EEMTNSEHVADQNLPPSNTQVEELQDNEQKDSSSLEPEKTTK) is disordered. The span at 678-692 (NEQKDSSSLEPEKTT) shows a compositional bias: basic and acidic residues. An S-adenosyl-L-methionine-binding site is contributed by Asp704. Cys732 (nucleophile) is an active-site residue.

The protein belongs to the class I-like SAM-binding methyltransferase superfamily. RNA M5U methyltransferase family.

The polypeptide is Zinc finger CCCH domain-containing protein 24 (Arabidopsis thaliana (Mouse-ear cress)).